Reading from the N-terminus, the 974-residue chain is UvrABC system protein A (974 aa).

ATP is bound at residue 34–41 (GLSGSGKS). ABC transporter domains lie at 331–610 (WARS…TNSL) and 630–959 (ISKT…QFLK). An ATP-binding site is contributed by 663-670 (GVSGGGKS). The segment at 762–788 (CEACQGDGVIKIEMHFLPDVYVTCDVC) adopts a C4-type zinc-finger fold.

This sequence belongs to the ABC transporter superfamily. UvrA family. Forms a heterotetramer with UvrB during the search for lesions.

The protein resides in the cytoplasm. Functionally, the UvrABC repair system catalyzes the recognition and processing of DNA lesions. UvrA is an ATPase and a DNA-binding protein. A damage recognition complex composed of 2 UvrA and 2 UvrB subunits scans DNA for abnormalities. When the presence of a lesion has been verified by UvrB, the UvrA molecules dissociate. The sequence is that of UvrABC system protein A from Brucella melitensis biotype 1 (strain ATCC 23456 / CCUG 17765 / NCTC 10094 / 16M).